We begin with the raw amino-acid sequence, 129 residues long: Follitropin subunit beta (129 aa).

A signal peptide spans 1 to 18 (MKSVQFCFLFCCWRVICC). 6 disulfides stabilise this stretch: C21–C69, C35–C84, C38–C122, C46–C100, C50–C102, and C105–C112. N25 and N42 each carry an N-linked (GlcNAc...) asparagine glycan.

The protein belongs to the glycoprotein hormones subunit beta family. In terms of assembly, heterodimer. The active follitropin is a heterodimer composed of an alpha chain/CGA shared with other hormones and a unique beta chain/FSHB shown here.

It is found in the secreted. Together with the alpha chain CGA constitutes follitropin, the follicle-stimulating hormone, and provides its biological specificity to the hormone heterodimer. Binds FSHR, a G protein-coupled receptor, on target cells to activate downstream signaling pathways. Follitropin is involved in follicle development and spermatogenesis in reproductive organs. In Panthera tigris altaica (Siberian tiger), this protein is Follitropin subunit beta (FSHB).